The following is a 107-amino-acid chain: Putative ankyrin repeat protein RP714 (107 aa).

ANK repeat units follow at residues 7 to 36 (PPLSPLIIAVLNGNIEYTSELLQNGVDIDV), 40 to 69 (NGNSALHIAASKGYTKIATMLLLYGATIDA), and 73 to 102 (ELATPLHYAAANNYKDLTQYLLNMNANKSA).

In Rickettsia prowazekii (strain Madrid E), this protein is Putative ankyrin repeat protein RP714.